The sequence spans 275 residues: Autophagy protein 5 (275 aa).

At methionine 1 the chain carries N-acetylmethionine. A Glycyl lysine isopeptide (Lys-Gly) (interchain with G-Cter in ATG12) cross-link involves residue lysine 130.

This sequence belongs to the ATG5 family. As to quaternary structure, forms a conjugate with ATG12. Part of the minor complex composed of 4 sets of ATG12-ATG5 and ATG16L1 (400 kDa); this complex interacts with ATG3 leading to disruption of ATG7 interaction and promotion of ATG8-like proteins lipidation. Forms an 800-kDa complex composed of ATG12-ATG5 and ATG16L2. The ATG12-ATG5 conjugate interacts with RAB33A; this interaction is bridged by ATG16L1 and promotes ATG12-ATG5-ATG16L1 complex recruitment to phagophores. Interacts with TECPR1; the interaction is direct and does not take place when ATG16L1 is associated with the ATG5-ATG12 conjugate. Interacts with DHX58/RIG-1, IFIH1/MDA5 and MAVS/IPS-1 in monomeric form as well as in ATG12-ATG5 conjugate form. The interaction with MAVS is further enhanced upon vesicular stomatitis virus (VSV) infection. Interacts with ATG3. Interacts with ATG7 and ATG10. Interacts with FADD. Interacts with Bassoon/BSN; this interaction is important for the regulation of presynaptic autophagy. Interacts with ATG16L2. In terms of processing, conjugated to ATG12; which is essential for autophagy, but is not required for association with isolation membrane. Post-translationally, acetylated by EP300. In terms of tissue distribution, ubiquitous.

It is found in the cytoplasm. It localises to the preautophagosomal structure membrane. Its function is as follows. Involved in autophagic vesicle formation. Conjugation with ATG12, through a ubiquitin-like conjugating system involving ATG7 as an E1-like activating enzyme and ATG10 as an E2-like conjugating enzyme, is essential for its function. The ATG12-ATG5 conjugate acts as an E3-like enzyme which is required for lipidation of ATG8 family proteins and their association to the vesicle membranes. Involved in mitochondrial quality control after oxidative damage, and in subsequent cellular longevity. Plays a critical role in multiple aspects of lymphocyte development and is essential for both B and T lymphocyte survival and proliferation. Required for optimal processing and presentation of antigens for MHC II. Involved in the maintenance of axon morphology and membrane structures, as well as in normal adipocyte differentiation. Promotes primary ciliogenesis through removal of OFD1 from centriolar satellites and degradation of IFT20 via the autophagic pathway. As part of the ATG8 conjugation system with ATG12 and ATG16L1, required for recruitment of LRRK2 to stressed lysosomes and induction of LRRK2 kinase activity in response to lysosomal stress. In terms of biological role, may play an important role in the apoptotic process, possibly within the modified cytoskeleton. Its expression is a relatively late event in the apoptotic process, occurring downstream of caspase activity. Plays a crucial role in IFN-gamma-induced autophagic cell death by interacting with FADD. (Microbial infection) May act as a proviral factor. In association with ATG12, negatively regulates the innate antiviral immune response by impairing the type I IFN production pathway upon vesicular stomatitis virus (VSV) infection. This chain is Autophagy protein 5, found in Mus musculus (Mouse).